Consider the following 252-residue polypeptide: Ubiquinone biosynthesis O-methyltransferase (252 aa).

The S-adenosyl-L-methionine site is built by R41, G72, D93, and M136.

It belongs to the methyltransferase superfamily. UbiG/COQ3 family.

The enzyme catalyses a 3-demethylubiquinol + S-adenosyl-L-methionine = a ubiquinol + S-adenosyl-L-homocysteine + H(+). The catalysed reaction is a 3-(all-trans-polyprenyl)benzene-1,2-diol + S-adenosyl-L-methionine = a 2-methoxy-6-(all-trans-polyprenyl)phenol + S-adenosyl-L-homocysteine + H(+). Its pathway is cofactor biosynthesis; ubiquinone biosynthesis. Its function is as follows. O-methyltransferase that catalyzes the 2 O-methylation steps in the ubiquinone biosynthetic pathway. The protein is Ubiquinone biosynthesis O-methyltransferase of Rhizobium leguminosarum bv. trifolii (strain WSM2304).